Here is a 308-residue protein sequence, read N- to C-terminus: Methionyl-tRNA formyltransferase (308 aa).

110-113 provides a ligand contact to (6S)-5,6,7,8-tetrahydrofolate; that stretch reads SLLP.

Belongs to the Fmt family.

It carries out the reaction L-methionyl-tRNA(fMet) + (6R)-10-formyltetrahydrofolate = N-formyl-L-methionyl-tRNA(fMet) + (6S)-5,6,7,8-tetrahydrofolate + H(+). Functionally, attaches a formyl group to the free amino group of methionyl-tRNA(fMet). The formyl group appears to play a dual role in the initiator identity of N-formylmethionyl-tRNA by promoting its recognition by IF2 and preventing the misappropriation of this tRNA by the elongation apparatus. This chain is Methionyl-tRNA formyltransferase, found in Neisseria gonorrhoeae (strain NCCP11945).